Consider the following 190-residue polypeptide: MNNNLQGDAIAAAIDVLNEERVIAYPTEAVFGVGCDPDSETAVMRLLELKLRPVDKGLILIAANYEQLKPYIDDTMLTDAQRETIFSRWPGPVTFVFPAPATTPRWLTGRFDSLAVRVTDHPLVVALCQAYGKPLVSTSANLSGLPPCRTVDEVRAQFGAAFPVVPGETGGRLNPSEIRDALTGELFRQG.

The YrdC-like domain maps to 7-190 (GDAIAAAIDV…ALTGELFRQG (184 aa)).

Belongs to the SUA5 family. TsaC subfamily.

It localises to the cytoplasm. It carries out the reaction L-threonine + hydrogencarbonate + ATP = L-threonylcarbamoyladenylate + diphosphate + H2O. Functionally, required for the formation of a threonylcarbamoyl group on adenosine at position 37 (t(6)A37) in tRNAs that read codons beginning with adenine. Catalyzes the conversion of L-threonine, HCO(3)(-)/CO(2) and ATP to give threonylcarbamoyl-AMP (TC-AMP) as the acyladenylate intermediate, with the release of diphosphate. The polypeptide is Threonylcarbamoyl-AMP synthase (Shigella dysenteriae serotype 1 (strain Sd197)).